A 132-amino-acid chain; its full sequence is Venom CUB domain-containing protein 2 (132 aa).

The N-terminal stretch at 1–17 is a signal peptide; the sequence is MKTLFLAIALFSAVALA. The region spanning 22-129 is the CUB domain; it reads ESAELVPGGE…RGFVACKATA (108 aa). 2 disulfides stabilise this stretch: C66-C125 and C77-C94.

Belongs to the venom CUB family. As to expression, expressed by the venom gland (posterior main gland) (at protein level).

It localises to the secreted. In Platymeris rhadamanthus (Red spot assassin bug), this protein is Venom CUB domain-containing protein 2.